The chain runs to 382 residues: MSLKEKTQSLFANAFGYPATRTIQAPGRVNLIGEHTDYNDGFVLPCAIDYQTVISCAPRDDRKVRVMAADYENQLDEFSLDAPIVAHENYQWANYVRGVVKHLQLRNNSFGGVDMVISGNVPQGAGLSSSASLEVAVGTVLQQLYHLPLDGAQIALNGQEAENQFVGCNCGIMDQLISALGKKDHALLIDCRSLGTKAVSMPKGVAVVIINSNFKRTLVGSEYNTRREQCETGARFFQQPALRDVTIEEFNAVAHELDPIVAKRVRHILTENARTVEAASALEQGDLKRMGELMAESHASMRDDFEITVPQIDTLVEIVKAVIGDKGGVRMTGGGFGGCIVALIPEELVPAVQQAVAEQYEAKTGIKETFYVCKPSQGAGQC.

Residue 34-37 (EHTD) coordinates substrate. 124-130 (GAGLSSS) provides a ligand contact to ATP. 2 residues coordinate Mg(2+): Ser130 and Glu162. The active-site Proton acceptor is the Asp174. Position 223 (Tyr223) interacts with substrate.

The protein belongs to the GHMP kinase family. GalK subfamily.

The protein resides in the cytoplasm. It catalyses the reaction alpha-D-galactose + ATP = alpha-D-galactose 1-phosphate + ADP + H(+). It participates in carbohydrate metabolism; galactose metabolism. Its function is as follows. Catalyzes the transfer of the gamma-phosphate of ATP to D-galactose to form alpha-D-galactose-1-phosphate (Gal-1-P). This Escherichia coli O127:H6 (strain E2348/69 / EPEC) protein is Galactokinase.